The chain runs to 310 residues: Spermatid maturation protein 1 (310 aa).

The helical transmembrane segment at I29–L49 threads the bilayer. A disordered region spans residues A215–P238. A coiled-coil region spans residues V262–Y286.

Testis-specific. Exclusively present in cytoplasm of steps 14-16 elongated spermatids (at protein level).

The protein resides in the membrane. It is found in the cytoplasm. Functionally, required for proper cytoplasm removal during spermatogenesis. The protein is Spermatid maturation protein 1 (Spem1) of Mus musculus (Mouse).